A 376-amino-acid polypeptide reads, in one-letter code: uncharacterized protein (376 aa).

Belongs to the NAD(P)-dependent epimerase/dehydratase family.

This is an uncharacterized protein from Mycobacterium bovis (strain ATCC BAA-935 / AF2122/97).